The sequence spans 84 residues: U4-theraphotoxin-Hhn1ac (84 aa).

Positions 1-22 are cleaved as a signal peptide; that stretch reads MKVTLIAILTCAAVLVLHTTAA. A propeptide spanning residues 23–47 is cleaved from the precursor; sequence EELEESQLMEVGMPDTELAAVDEER. Disulfide bonds link C51/C65, C55/C76, and C70/C81.

The protein belongs to the neurotoxin 12 (Hwtx-2) family. 02 (Hwtx-2) subfamily. As to expression, expressed by the venom gland.

Its subcellular location is the secreted. Its function is as follows. Postsynaptic neurotoxin. This chain is U4-theraphotoxin-Hhn1ac, found in Cyriopagopus hainanus (Chinese bird spider).